A 110-amino-acid polypeptide reads, in one-letter code: Small heat shock protein hspG11 (110 aa).

Residues 30–110 (KTIIDILPPM…KSTSTSSTFR (81 aa)) form the sHSP domain. Residues 78 to 110 (KDLNKQHNNNNNNNNNNNNLVIEKSTSTSSTFR) form a disordered region. Over residues 85-96 (NNNNNNNNNNNN) the composition is skewed to low complexity. Over residues 101-110 (KSTSTSSTFR) the composition is skewed to polar residues.

This sequence belongs to the small heat shock protein (HSP20) family.

The sequence is that of Small heat shock protein hspG11 (hspG11) from Dictyostelium discoideum (Social amoeba).